Consider the following 244-residue polypeptide: Small ribosomal subunit protein uS2 (244 aa).

Belongs to the universal ribosomal protein uS2 family.

The polypeptide is Small ribosomal subunit protein uS2 (Endomicrobium trichonymphae).